Here is a 557-residue protein sequence, read N- to C-terminus: Urocanate hydratase (557 aa).

Residues 1 to 20 (MSNPRHNEREVRSPRGDELN) form a disordered region. NAD(+)-binding positions include 52–53 (GG), Q130, 176–178 (GMG), E196, R201, 242–243 (NA), 263–267 (QTSAH), 273–274 (YL), and Y322. C410 is a catalytic residue. G492 contacts NAD(+).

The protein belongs to the urocanase family. It depends on NAD(+) as a cofactor.

It localises to the cytoplasm. It catalyses the reaction 4-imidazolone-5-propanoate = trans-urocanate + H2O. Its pathway is amino-acid degradation; L-histidine degradation into L-glutamate; N-formimidoyl-L-glutamate from L-histidine: step 2/3. In terms of biological role, catalyzes the conversion of urocanate to 4-imidazolone-5-propionate. The sequence is that of Urocanate hydratase from Brucella suis (strain ATCC 23445 / NCTC 10510).